The primary structure comprises 356 residues: Glutamine synthetase (356 aa).

Residues 26-105 (IMAEYVWVDA…VLAECWNAGG (80 aa)) form the GS beta-grasp domain. Residues 112–356 (FRHDCVKVMD…TKALLQFSLA (245 aa)) form the GS catalytic domain.

The protein belongs to the glutamine synthetase family. In terms of assembly, homooctamer.

Its subcellular location is the cytoplasm. The enzyme catalyses L-glutamate + NH4(+) + ATP = L-glutamine + ADP + phosphate + H(+). The polypeptide is Glutamine synthetase (GLN1) (Fusarium solani subsp. phaseoli (Nectria haematococca)).